Reading from the N-terminus, the 249-residue chain is Ribonuclease PH (249 aa).

Residues Arg90 and 128-130 each bind phosphate; that span reads GTR.

Belongs to the RNase PH family. Homohexameric ring arranged as a trimer of dimers.

The catalysed reaction is tRNA(n+1) + phosphate = tRNA(n) + a ribonucleoside 5'-diphosphate. Phosphorolytic 3'-5' exoribonuclease that plays an important role in tRNA 3'-end maturation. Removes nucleotide residues following the 3'-CCA terminus of tRNAs; can also add nucleotides to the ends of RNA molecules by using nucleoside diphosphates as substrates, but this may not be physiologically important. Probably plays a role in initiation of 16S rRNA degradation (leading to ribosome degradation) during starvation. This chain is Ribonuclease PH, found in Parasynechococcus marenigrum (strain WH8102).